The primary structure comprises 318 residues: Ribose-phosphate pyrophosphokinase 2 (318 aa).

96-101 (RQDKKD) lines the ATP pocket. Mg(2+) contacts are provided by D128, H130, D139, and D143. H130 contributes to the ATP binding site. The tract at residues 212 to 227 (KDRVAILVDDMADTCG) is binding of phosphoribosylpyrophosphate.

It belongs to the ribose-phosphate pyrophosphokinase family. In terms of assembly, homodimer. The active form is probably a hexamer composed of 3 homodimers. It depends on Mg(2+) as a cofactor.

The enzyme catalyses D-ribose 5-phosphate + ATP = 5-phospho-alpha-D-ribose 1-diphosphate + AMP + H(+). It functions in the pathway metabolic intermediate biosynthesis; 5-phospho-alpha-D-ribose 1-diphosphate biosynthesis; 5-phospho-alpha-D-ribose 1-diphosphate from D-ribose 5-phosphate (route I): step 1/1. With respect to regulation, activated by magnesium and inorganic phosphate. Competitively or non-competitively inhibited by ADP, 2,3-bisphosphoglyceride or GDP. Catalyzes the synthesis of phosphoribosylpyrophosphate (PRPP) that is essential for nucleotide synthesis. The protein is Ribose-phosphate pyrophosphokinase 2 (Prps2) of Mus musculus (Mouse).